We begin with the raw amino-acid sequence, 538 residues long: Zinc finger protein 155 (538 aa).

The 71-residue stretch at valine 8–serine 78 folds into the KRAB domain. C2H2-type zinc fingers lie at residues tyrosine 176 to histidine 198, phenylalanine 204 to histidine 226, phenylalanine 232 to histidine 254, tyrosine 260 to histidine 282, phenylalanine 288 to histidine 310, phenylalanine 316 to histidine 338, tyrosine 344 to histidine 366, tyrosine 372 to histidine 394, phenylalanine 400 to histidine 422, tyrosine 428 to histidine 450, and tyrosine 456 to histidine 478. The segment at phenylalanine 484–tyrosine 506 adopts a C2H2-type 12; degenerate zinc-finger fold.

The protein belongs to the krueppel C2H2-type zinc-finger protein family.

It is found in the nucleus. Functionally, may be involved in transcriptional regulation. The protein is Zinc finger protein 155 (ZNF155) of Homo sapiens (Human).